A 405-amino-acid chain; its full sequence is MPLAMNLWSLTLLPGQQYPTYVRRDFQITNAALGEELRSKDGRSVVKVTHNPISQSMLESDDEWSDEDEDEEILSEEDDGEMEVEEVKQKKGKKAEKVEEEDSEEEDEDESDFEDELEETNVLCSLTAGKTEQASLNLTFVRGEVVVFEVTGDNVVHLMGNYIQQDEDSDDESDSDFDGEDDYSELYGSDDDLELDSEEEAAVAKITEIPDEPTPKTKKALPAADKKPVPEAKPAQKRKAEELESPAKEDAALSKAQKKKLAKKAKVEGEKAEEKPAAAAVAEKPATKKEAKAPQKKTLPSGLIIEDIKIGDGPVAKTGKRLGMRYIGKLTNGKQFDANTSGKPFSFVLGKGEVIRGWDEGLAGMAVGGERRLTIPAALAYGNQKIPGIPKNSTLKFDVKLVSIN.

Disordered stretches follow at residues 49–117 (THNP…EDEL) and 164–297 (QQDE…PQKK). 3 stretches are compositionally biased toward acidic residues: residues 59–84 (ESDD…EMEV), 98–117 (VEEE…EDEL), and 165–201 (QDED…EEEA). 2 stretches are compositionally biased toward basic and acidic residues: residues 238 to 252 (RKAE…EDAA) and 265 to 276 (AKVEGEKAEEKP). The 87-residue stretch at 319–405 (GKRLGMRYIG…KFDVKLVSIN (87 aa)) folds into the PPIase FKBP-type domain.

It belongs to the FKBP-type PPIase family. FKBP3/4 subfamily. Binds to histones H3 and H4.

The protein localises to the nucleus. It catalyses the reaction [protein]-peptidylproline (omega=180) = [protein]-peptidylproline (omega=0). With respect to regulation, inhibited by both FK506 and rapamycin. In terms of biological role, PPIase that acts as a histone chaperone. Histone proline isomerase that increases the rate of cis-trans isomerization at prolines on the histone H3 N-terminal tail. Proline isomerization influences H3 methylation thereby regulating gene expression. This is FK506-binding protein 4 (FPR4) from Cryptococcus neoformans var. neoformans serotype D (strain B-3501A) (Filobasidiella neoformans).